Consider the following 251-residue polypeptide: Mycofactocin precursor peptide peptidase (251 aa).

Residues Glu-38, His-40, Asp-49, His-128, and Glu-167 each contribute to the a divalent metal cation site.

It belongs to the creatininase superfamily. As to quaternary structure, homooctamer. It depends on Fe(2+) as a cofactor. Requires Zn(2+) as cofactor.

The catalysed reaction is [mycofactocin precursor peptide]-C-terminal glycyl-N-{5-[(4-hydroxyphenyl)methyl]-4,4-dimethyl-2-oxopyrrolidin-3-yl}acetamide + H2O = [mycofactocin precursor peptide]-C-terminal glycine + 3-amino-5-[(4-hydroxyphenyl)methyl]-4,4-dimethyl-2-pyrrolidin-2-one. Its function is as follows. Peptidase involved in the biosynthesis of the enzyme cofactor mycofactocin (MFT). Catalyzes cleavage of the MftC-modified MftA peptide to liberate its final two residues, which consist of a cross-linked valine-decarboxylated tyrosine dipeptide (named 3-amino-5-[(4-hydroxyphenyl)methyl]-4,4-dimethyl-2-pyrrolidin-2-one or ADHP). The sequence is that of Mycofactocin precursor peptide peptidase (mftE) from Mycobacterium tuberculosis (strain CDC 1551 / Oshkosh).